The primary structure comprises 295 residues: Ethanolamine ammonia-lyase small subunit (295 aa).

Positions 207, 228, and 258 each coordinate adenosylcob(III)alamin.

The protein belongs to the EutC family. The basic unit is a heterodimer which dimerizes to form tetramers. The heterotetramers trimerize; 6 large subunits form a core ring with 6 small subunits projecting outwards. The cofactor is adenosylcob(III)alamin.

The protein localises to the bacterial microcompartment. The enzyme catalyses ethanolamine = acetaldehyde + NH4(+). Its pathway is amine and polyamine degradation; ethanolamine degradation. Catalyzes the deamination of various vicinal amino-alcohols to oxo compounds. Allows this organism to utilize ethanolamine as the sole source of nitrogen and carbon in the presence of external vitamin B12. This chain is Ethanolamine ammonia-lyase small subunit, found in Escherichia coli (strain SMS-3-5 / SECEC).